The chain runs to 369 residues: Flagellar P-ring protein (369 aa).

The signal sequence occupies residues 1–22 (MIKLKQLIAATLLLSAAFGAHA).

This sequence belongs to the FlgI family. In terms of assembly, the basal body constitutes a major portion of the flagellar organelle and consists of four rings (L,P,S, and M) mounted on a central rod.

The protein localises to the periplasm. It localises to the bacterial flagellum basal body. Its function is as follows. Assembles around the rod to form the L-ring and probably protects the motor/basal body from shearing forces during rotation. The protein is Flagellar P-ring protein of Pseudomonas syringae pv. tomato (strain ATCC BAA-871 / DC3000).